The following is a 142-amino-acid chain: D-aminoacyl-tRNA deacylase (142 aa).

Residues 133-134 carry the Gly-cisPro motif, important for rejection of L-amino acids motif; it reads GP.

It belongs to the DTD family. Homodimer.

It is found in the cytoplasm. It carries out the reaction glycyl-tRNA(Ala) + H2O = tRNA(Ala) + glycine + H(+). The catalysed reaction is a D-aminoacyl-tRNA + H2O = a tRNA + a D-alpha-amino acid + H(+). In terms of biological role, an aminoacyl-tRNA editing enzyme that deacylates mischarged D-aminoacyl-tRNAs. Also deacylates mischarged glycyl-tRNA(Ala), protecting cells against glycine mischarging by AlaRS. Acts via tRNA-based rather than protein-based catalysis; rejects L-amino acids rather than detecting D-amino acids in the active site. By recycling D-aminoacyl-tRNA to D-amino acids and free tRNA molecules, this enzyme counteracts the toxicity associated with the formation of D-aminoacyl-tRNA entities in vivo and helps enforce protein L-homochirality. This is D-aminoacyl-tRNA deacylase from Acidothermus cellulolyticus (strain ATCC 43068 / DSM 8971 / 11B).